The following is a 231-amino-acid chain: NADH-ubiquinone oxidoreductase chain 4 (231 aa).

The next 7 membrane-spanning stretches (helical) occupy residues 1 to 21 (PIAG…YGII), 34 to 54 (LFLP…LTCL), 63 to 85 (IAYS…TPWG), 89 to 111 (AMAL…NTTY), 128 to 148 (ILPM…AIPP), 156 to 176 (LLIM…LGLS), and 211 to 231 (LLIA…ELVI).

Belongs to the complex I subunit 4 family.

Its subcellular location is the mitochondrion membrane. The enzyme catalyses a ubiquinone + NADH + 5 H(+)(in) = a ubiquinol + NAD(+) + 4 H(+)(out). Functionally, core subunit of the mitochondrial membrane respiratory chain NADH dehydrogenase (Complex I) that is believed to belong to the minimal assembly required for catalysis. Complex I functions in the transfer of electrons from NADH to the respiratory chain. The immediate electron acceptor for the enzyme is believed to be ubiquinone. The protein is NADH-ubiquinone oxidoreductase chain 4 (MT-ND4) of Crotalus adamanteus (Eastern diamondback rattlesnake).